The primary structure comprises 114 residues: Hydrogenase maturation factor HypA (114 aa).

Residue histidine 2 participates in Ni(2+) binding. Residues cysteine 73, cysteine 76, cysteine 89, and cysteine 92 each contribute to the Zn(2+) site.

It belongs to the HypA/HybF family.

Involved in the maturation of [NiFe] hydrogenases. Required for nickel insertion into the metal center of the hydrogenase. This Psychromonas ingrahamii (strain DSM 17664 / CCUG 51855 / 37) protein is Hydrogenase maturation factor HypA.